The primary structure comprises 71 residues: DNA-directed RNA polymerase subunit epsilon (71 aa).

Belongs to the RNA polymerase subunit epsilon family. RNAP is composed of a core of 2 alpha, a beta and a beta' subunit. The core is associated with a delta subunit, and at least one of epsilon or omega. When a sigma factor is associated with the core the holoenzyme is formed, which can initiate transcription.

It catalyses the reaction RNA(n) + a ribonucleoside 5'-triphosphate = RNA(n+1) + diphosphate. In terms of biological role, a non-essential component of RNA polymerase (RNAP). This chain is DNA-directed RNA polymerase subunit epsilon, found in Geobacillus thermodenitrificans (strain NG80-2).